An 860-amino-acid chain; its full sequence is Leucine--tRNA ligase (860 aa).

The 'HIGH' region motif lies at 42–52 (PYPSGRLHMGH). Residues 619-623 (KMSKS) carry the 'KMSKS' region motif. Lys622 contributes to the ATP binding site.

It belongs to the class-I aminoacyl-tRNA synthetase family.

The protein localises to the cytoplasm. It catalyses the reaction tRNA(Leu) + L-leucine + ATP = L-leucyl-tRNA(Leu) + AMP + diphosphate. This is Leucine--tRNA ligase from Escherichia coli (strain 55989 / EAEC).